A 1179-amino-acid chain; its full sequence is Integrin alpha-1 (1179 aa).

The signal sequence occupies residues 1-28 (MAPRPRARPGVAVACCWLLTVVLRCCVS). Over 29–1141 (FNVDVKNSMT…SKDGLPGRVP (1113 aa)) the chain is Extracellular. An FG-GAP 1 repeat occupies 30–91 (NVDVKNSMTF…CPVGRGESLP (62 aa)). Asparagine 74 carries an N-linked (GlcNAc...) asparagine glycan. Residues cysteine 82 and cysteine 92 are joined by a disulfide bond. 9 N-linked (GlcNAc...) asparagine glycosylation sites follow: asparagine 100, asparagine 105, asparagine 112, asparagine 217, asparagine 317, asparagine 341, asparagine 402, asparagine 418, and asparagine 460. Residues 101 to 160 (TSIPNVTEVKENMTFGSTLVTNPNGGFLACGPLYAYRCGHLHYTTGICSDVSPTFQVVNS) form an FG-GAP 2 repeat. The region spanning 161 to 360 (IAPVQECSTQ…IVKTLGERIF (200 aa)) is the VWFA domain. An FG-GAP 3 repeat occupies 365–417 (TADQSAASFEMEMSQTGFSAHYSQDWVMLGAVGAYDWNGTVVMQKASQIIIPR). 4 FG-GAP repeats span residues 422–475 (NVES…DGNI), 476–538 (KILQ…RFEY), 557–615 (SCTT…TIRK), and 619–679 (QRIP…FEPN). Residues aspartate 498, aspartate 500, aspartate 502, and aspartate 506 each coordinate Ca(2+). N-linked (GlcNAc...) asparagine glycosylation is present at asparagine 532. The Ca(2+) site is built by aspartate 580, asparagine 582, aspartate 584, aspartate 588, aspartate 642, asparagine 644, aspartate 646, and aspartate 650. A disulfide bridge links cysteine 688 with cysteine 697. N-linked (GlcNAc...) asparagine glycosylation is found at asparagine 699, asparagine 748, and asparagine 780. A disulfide bridge connects residues cysteine 703 and cysteine 756. A disulfide bridge connects residues cysteine 808 and cysteine 814. N-linked (GlcNAc...) asparagine glycosylation is found at asparagine 840, asparagine 883, asparagine 908, asparagine 915, asparagine 939, asparagine 966, asparagine 974, and asparagine 1008. A disulfide bond links cysteine 878 and cysteine 886. 2 disulfide bridges follow: cysteine 1030-cysteine 1062 and cysteine 1065-cysteine 1072. Residues asparagine 1073, asparagine 1083, asparagine 1102, and asparagine 1113 are each glycosylated (N-linked (GlcNAc...) asparagine). Residues 1142–1164 (LWVILLSAFAGLLLLMLLILALW) traverse the membrane as a helical segment. The Cytoplasmic portion of the chain corresponds to 1165–1179 (KIGFFKRPLKKKMEK). The GFFKR motif signature appears at 1167–1171 (GFFKR).

The protein belongs to the integrin alpha chain family. In terms of assembly, heterodimer of an alpha and a beta subunit. Alpha-1 associates with beta-1. Interacts with RAB21. Interacts (via cytoplasmic domain) with PTPN2; activates PTPN2 phosphatase activity towards EGFR and negatively regulates EGF signaling.

The protein resides in the membrane. Its function is as follows. Integrin alpha-1/beta-1 is a receptor for laminin and collagen. It recognizes the proline-hydroxylated sequence G-F-P-G-E-R in collagen. Involved in anchorage-dependent, negative regulation of EGF-stimulated cell growth. The chain is Integrin alpha-1 (ITGA1) from Homo sapiens (Human).